The primary structure comprises 634 residues: Pheromone-processing carboxypeptidase KEX1 (634 aa).

Residues 1 to 24 (MKLAMRRASTFALLALSWSAAVSA) form the signal peptide. The Lumenal portion of the chain corresponds to 25–512 (ASSAGDYFVR…DEAKWYAYRK (488 aa)). Residues S177 and D378 contribute to the active site. N429 carries an N-linked (GlcNAc...) asparagine glycan. The active site involves H440. The segment at 468–498 (NPTDSRLDGEKLPETTVGGAAGNSTSKQEEE) is disordered. The N-linked (GlcNAc...) asparagine glycan is linked to N490. Residues 513 to 533 (SGEVVLVIVAVAAVAWGWYVW) traverse the membrane as a helical segment. The Cytoplasmic segment spans residues 534-634 (RDRRRRRGYQ…EGGPSGGRGR (101 aa)). The interval 542–634 (YQGIFGGSPS…EGGPSGGRGR (93 aa)) is disordered.

This sequence belongs to the peptidase S10 family.

The protein resides in the golgi apparatus. Its subcellular location is the trans-Golgi network membrane. The catalysed reaction is Preferential release of a C-terminal arginine or lysine residue.. In terms of biological role, protease with a carboxypeptidase B-like function involved in the C-terminal processing of the lysine and arginine residues from protein precursors. Promotes cell fusion and is involved in the programmed cell death. The polypeptide is Pheromone-processing carboxypeptidase KEX1 (KEX1) (Pyricularia oryzae (strain 70-15 / ATCC MYA-4617 / FGSC 8958) (Rice blast fungus)).